Here is a 115-residue protein sequence, read N- to C-terminus: NAD(P)H-quinone oxidoreductase subunit M (115 aa).

It belongs to the complex I NdhM subunit family. In terms of assembly, NDH-1 can be composed of about 15 different subunits; different subcomplexes with different compositions have been identified which probably have different functions.

Its subcellular location is the cellular thylakoid membrane. The enzyme catalyses a plastoquinone + NADH + (n+1) H(+)(in) = a plastoquinol + NAD(+) + n H(+)(out). It catalyses the reaction a plastoquinone + NADPH + (n+1) H(+)(in) = a plastoquinol + NADP(+) + n H(+)(out). Its function is as follows. NDH-1 shuttles electrons from an unknown electron donor, via FMN and iron-sulfur (Fe-S) centers, to quinones in the respiratory and/or the photosynthetic chain. The immediate electron acceptor for the enzyme in this species is believed to be plastoquinone. Couples the redox reaction to proton translocation, and thus conserves the redox energy in a proton gradient. Cyanobacterial NDH-1 also plays a role in inorganic carbon-concentration. This is NAD(P)H-quinone oxidoreductase subunit M from Prochlorococcus marinus (strain SARG / CCMP1375 / SS120).